Here is a 338-residue protein sequence, read N- to C-terminus: tRNA (cytosine(34)-C(5))-methyltransferase, mitochondrial (338 aa).

Residues 140–146 (CAAPGGK), E163, D194, and D212 each bind S-adenosyl-L-methionine. Residue C266 is the Nucleophile of the active site.

It belongs to the class I-like SAM-binding methyltransferase superfamily. RsmB/NOP family.

It localises to the mitochondrion matrix. It catalyses the reaction cytidine(34) in mitochondrial tRNA + S-adenosyl-L-methionine = 5-methylcytidine(34) in mitochondrial tRNA + S-adenosyl-L-homocysteine + H(+). Its function is as follows. Mitochondrial tRNA methyltransferase that mediates methylation of cytosine to 5-methylcytosine (m5C) at position 34 of mt-tRNA(Met). mt-tRNA(Met) methylation at cytosine(34) takes place at the wobble position of the anticodon and initiates the formation of 5-formylcytosine (f(5)c) at this position. mt-tRNA(Met) containing the f(5)c modification at the wobble position enables recognition of the AUA codon in addition to the AUG codon, expanding codon recognition in mitochondrial translation. The chain is tRNA (cytosine(34)-C(5))-methyltransferase, mitochondrial from Bos taurus (Bovine).